The following is a 429-amino-acid chain: Probable electron transfer flavoprotein-quinone oxidoreductase YdiS (429 aa).

FAD is bound at residue 8–22 (AIVVGAGVAGSVAAL).

Belongs to the ETF-QO/FixC family. Requires FAD as cofactor.

Functionally, probably accepts electrons from YdiQ/YdiR and reduces a quinone. The sequence is that of Probable electron transfer flavoprotein-quinone oxidoreductase YdiS (ydiS) from Escherichia coli (strain K12).